The chain runs to 188 residues: Ribosome maturation factor RimM (188 aa).

The PRC barrel domain occupies 98 to 171 (EGEFFQGDLV…RIVIHPPEYV (74 aa)).

The protein belongs to the RimM family. In terms of assembly, binds ribosomal protein uS19.

It localises to the cytoplasm. Functionally, an accessory protein needed during the final step in the assembly of 30S ribosomal subunit, possibly for assembly of the head region. Essential for efficient processing of 16S rRNA. May be needed both before and after RbfA during the maturation of 16S rRNA. It has affinity for free ribosomal 30S subunits but not for 70S ribosomes. The sequence is that of Ribosome maturation factor RimM from Myxococcus xanthus (strain DK1622).